The primary structure comprises 124 residues: S-adenosylmethionine decarboxylase proenzyme (124 aa).

S63 functions as the Schiff-base intermediate with substrate; via pyruvic acid in the catalytic mechanism. Pyruvic acid (Ser); by autocatalysis is present on S63. H68 acts as the Proton acceptor; for processing activity in catalysis. The active-site Proton donor; for catalytic activity is the C83.

This sequence belongs to the prokaryotic AdoMetDC family. Type 1 subfamily. In terms of assembly, heterotetramer of two alpha and two beta chains arranged as a dimer of alpha/beta heterodimers. The cofactor is pyruvate. Is synthesized initially as an inactive proenzyme. Formation of the active enzyme involves a self-maturation process in which the active site pyruvoyl group is generated from an internal serine residue via an autocatalytic post-translational modification. Two non-identical subunits are generated from the proenzyme in this reaction, and the pyruvate is formed at the N-terminus of the alpha chain, which is derived from the carboxyl end of the proenzyme. The post-translation cleavage follows an unusual pathway, termed non-hydrolytic serinolysis, in which the side chain hydroxyl group of the serine supplies its oxygen atom to form the C-terminus of the beta chain, while the remainder of the serine residue undergoes an oxidative deamination to produce ammonia and the pyruvoyl group blocking the N-terminus of the alpha chain.

The enzyme catalyses S-adenosyl-L-methionine + H(+) = S-adenosyl 3-(methylsulfanyl)propylamine + CO2. Its pathway is amine and polyamine biosynthesis; S-adenosylmethioninamine biosynthesis; S-adenosylmethioninamine from S-adenosyl-L-methionine: step 1/1. Functionally, catalyzes the decarboxylation of S-adenosylmethionine to S-adenosylmethioninamine (dcAdoMet), the propylamine donor required for the synthesis of the polyamines spermine and spermidine from the diamine putrescine. The protein is S-adenosylmethionine decarboxylase proenzyme of Thermoanaerobacter pseudethanolicus (strain ATCC 33223 / 39E) (Clostridium thermohydrosulfuricum).